The chain runs to 175 residues: Transcription factor E (175 aa).

Positions 3-88 constitute an HTH TFE/IIEalpha-type domain; sequence DNPLIQQVLF…TWKPSLEKLP (86 aa).

Belongs to the TFE family. Monomer. Interaction with RNA polymerase subunits RpoF and RpoE is necessary for Tfe stimulatory transcription activity. Able to interact with Tbp and RNA polymerase in the absence of DNA promoter. Interacts both with the preinitiation and elongation complexes.

Transcription factor that plays a role in the activation of archaeal genes transcribed by RNA polymerase. Facilitates transcription initiation by enhancing TATA-box recognition by TATA-box-binding protein (Tbp), and transcription factor B (Tfb) and RNA polymerase recruitment. Not absolutely required for transcription in vitro, but particularly important in cases where Tbp or Tfb function is not optimal. It dynamically alters the nucleic acid-binding properties of RNA polymerases by stabilizing the initiation complex and destabilizing elongation complexes. Seems to translocate with the RNA polymerase following initiation and acts by binding to the non template strand of the transcription bubble in elongation complexes. This is Transcription factor E from Methanococcus vannielii (strain ATCC 35089 / DSM 1224 / JCM 13029 / OCM 148 / SB).